Reading from the N-terminus, the 230-residue chain is Potassium/proton antiporter CemA (230 aa).

A run of 4 helical transmembrane segments spans residues Leu-7–Phe-27, Ile-106–Leu-126, Leu-145–His-165, and Leu-181–Leu-201.

Belongs to the CemA family.

It localises to the plastid. The protein resides in the chloroplast inner membrane. The catalysed reaction is K(+)(in) + H(+)(out) = K(+)(out) + H(+)(in). In terms of biological role, contributes to K(+)/H(+) antiport activity by supporting proton efflux to control proton extrusion and homeostasis in chloroplasts in a light-dependent manner to modulate photosynthesis. Prevents excessive induction of non-photochemical quenching (NPQ) under continuous-light conditions. Indirectly promotes efficient inorganic carbon uptake into chloroplasts. In Lolium perenne (Perennial ryegrass), this protein is Potassium/proton antiporter CemA.